A 241-amino-acid chain; its full sequence is Deoxyribose-phosphate aldolase (241 aa).

The active-site Proton donor/acceptor is the Asp95. The active-site Schiff-base intermediate with acetaldehyde is the Lys159. Catalysis depends on Lys188, which acts as the Proton donor/acceptor.

The protein belongs to the DeoC/FbaB aldolase family. DeoC type 1 subfamily.

It localises to the cytoplasm. It catalyses the reaction 2-deoxy-D-ribose 5-phosphate = D-glyceraldehyde 3-phosphate + acetaldehyde. It participates in carbohydrate degradation; 2-deoxy-D-ribose 1-phosphate degradation; D-glyceraldehyde 3-phosphate and acetaldehyde from 2-deoxy-alpha-D-ribose 1-phosphate: step 2/2. Functionally, catalyzes a reversible aldol reaction between acetaldehyde and D-glyceraldehyde 3-phosphate to generate 2-deoxy-D-ribose 5-phosphate. The chain is Deoxyribose-phosphate aldolase from Rhodopirellula baltica (strain DSM 10527 / NCIMB 13988 / SH1).